The primary structure comprises 398 residues: MSERVILAYSGGLDTSVAISWIGKETGREVVAVAIDLGQGGEDMEVIRQRALDCGAVEAVVVDARDEFAEGYCLPTIRNNALYMDRYPLVSAISRPLIVKHLVAAAREHGGSIVAHGCTGKGNDQVRFEVGFASLAPDLEVLAPVRDYAWTREKAIAFAEENAIPINVTKRSPFSIDQNVWGRAVETGFLEHLWNAPTKDVYAYTEDPTLNWSTPDEVIVGFERGVPVSIDGKPVSVLGAIEELNARAGAQGVGRLDVVEDRLVGIKSREIYEAPGAMVLITAHTELEHVTLERELGRFKRHTDQRWAELVYDGLWYSPLKAALESFVDKTQEHVTGEIRMVLHGGHIAVNGRRSAESLYDFNLATYDEGDSFDQSAAKGFVYVHGLSSKIASRRDQR.

8-16 (AYSGGLDTS) serves as a coordination point for ATP. Tyrosine 87 is a binding site for L-citrulline. Glycine 117 contributes to the ATP binding site. Residues threonine 119, asparagine 123, and aspartate 124 each contribute to the L-aspartate site. Asparagine 123 is a binding site for L-citrulline. Residues arginine 127, serine 175, glutamate 260, and tyrosine 272 each coordinate L-citrulline.

Belongs to the argininosuccinate synthase family. Type 1 subfamily. Homotetramer.

It localises to the cytoplasm. The catalysed reaction is L-citrulline + L-aspartate + ATP = 2-(N(omega)-L-arginino)succinate + AMP + diphosphate + H(+). It participates in amino-acid biosynthesis; L-arginine biosynthesis; L-arginine from L-ornithine and carbamoyl phosphate: step 2/3. This chain is Argininosuccinate synthase, found in Mycobacterium avium (strain 104).